The following is a 279-amino-acid chain: Movement protein (279 aa).

The segment covering 256-266 (PPIAIGSPSAS) has biased composition (low complexity). Residues 256-279 (PPIAIGSPSASRNNSFRSQVVNGL) are disordered. The segment covering 267-279 (RNNSFRSQVVNGL) has biased composition (polar residues).

Belongs to the cucumovirus movement protein family.

Its subcellular location is the host cell junction. It is found in the host plasmodesma. Functionally, transports viral genome to neighboring plant cells directly through plasmosdesmata, without any budding. The movement protein allows efficient cell to cell propagation, by bypassing the host cell wall barrier. Acts by forming a tubular structure at the host plasmodesmata, enlarging it enough to allow free passage of virion capsids. The sequence is that of Movement protein from Cucumis sativus (Cucumber).